The sequence spans 80 residues: Large ribosomal subunit protein bL31B (80 aa).

The protein belongs to the bacterial ribosomal protein bL31 family. Type B subfamily. In terms of assembly, part of the 50S ribosomal subunit.

The sequence is that of Large ribosomal subunit protein bL31B from Xanthomonas campestris pv. campestris (strain 8004).